We begin with the raw amino-acid sequence, 260 residues long: tRNA pseudouridine synthase B (260 aa).

Histidine 44 provides a ligand contact to substrate. Residue aspartate 49 is the Nucleophile of the active site. 3 residues coordinate substrate: tyrosine 77, tyrosine 180, and leucine 201.

Belongs to the pseudouridine synthase TruB family. Type 1 subfamily.

It catalyses the reaction uridine(55) in tRNA = pseudouridine(55) in tRNA. Responsible for synthesis of pseudouridine from uracil-55 in the psi GC loop of transfer RNAs. The chain is tRNA pseudouridine synthase B from Blochmanniella pennsylvanica (strain BPEN).